The following is a 151-amino-acid chain: Neuroglobin (151 aa).

The 149-residue stretch at 1 to 149 folds into the Globin domain; sequence MERPEQELIR…VVQAMSRGWD (149 aa). The heme b site is built by histidine 64 and histidine 96.

The protein belongs to the globin family. As to quaternary structure, monomer. Homodimer and homotetramer; disulfide-linked. Mainly monomeric but also detected as part of homodimers and homotetramers. Interacts with 14-3-3 proteins; regulates the phosphorylation of NGB. Could interact (ferrous form) with G-alpha(i) proteins (GTP-bound form). In terms of processing, phosphorylated during hypoxia by ERK1/ERK2. Phosphorylation regulates the heme pocket hexacoordination preventing the association of His-64 with the heme metal center. Thereby, promotes the access of dioxygen and nitrite to the heme and stimulates the nitrite reductase activity. Phosphorylation during hypoxia is stabilized by 14-3-3 proteins.

Its subcellular location is the cytoplasm. It localises to the cytosol. The protein resides in the mitochondrion matrix. It catalyses the reaction Fe(III)-heme b-[protein] + nitric oxide + H2O = Fe(II)-heme b-[protein] + nitrite + 2 H(+). Functionally, monomeric globin with a bis-histidyl six-coordinate heme-iron atom through which it can bind dioxygen, carbon monoxide and nitric oxide. Could help transport oxygen and increase its availability to the metabolically active neuronal tissues, though its low quantity in tissues as well as its high affinity for dioxygen, which may limit its oxygen-releasing ability, argue against it. The ferrous/deoxygenated form exhibits a nitrite reductase activity and it could produce nitric oxide which in turn inhibits cellular respiration in response to hypoxia. In its ferrous/deoxygenated state, it may also exhibit GDI (Guanine nucleotide Dissociation Inhibitor) activity toward heterotrimeric G-alpha proteins, thereby regulating signal transduction to facilitate neuroprotective responses in the wake of hypoxia and associated oxidative stress. The protein is Neuroglobin of Oryctolagus cuniculus (Rabbit).